Reading from the N-terminus, the 384-residue chain is S-adenosylmethionine synthase (384 aa).

His15 is a binding site for ATP. Asp17 serves as a coordination point for Mg(2+). Glu43 lines the K(+) pocket. 2 residues coordinate L-methionine: Glu56 and Gln99. The flexible loop stretch occupies residues 99 to 109 (QSPDINQGVDR). ATP-binding positions include 164–166 (DAK), 230–231 (RF), Asp239, 245–246 (RK), Ala262, and Lys266. Asp239 is an L-methionine binding site. Lys270 is an L-methionine binding site.

Belongs to the AdoMet synthase family. Homotetramer; dimer of dimers. It depends on Mg(2+) as a cofactor. K(+) serves as cofactor.

It localises to the cytoplasm. The catalysed reaction is L-methionine + ATP + H2O = S-adenosyl-L-methionine + phosphate + diphosphate. The protein operates within amino-acid biosynthesis; S-adenosyl-L-methionine biosynthesis; S-adenosyl-L-methionine from L-methionine: step 1/1. Catalyzes the formation of S-adenosylmethionine (AdoMet) from methionine and ATP. The overall synthetic reaction is composed of two sequential steps, AdoMet formation and the subsequent tripolyphosphate hydrolysis which occurs prior to release of AdoMet from the enzyme. The polypeptide is S-adenosylmethionine synthase (Salmonella gallinarum (strain 287/91 / NCTC 13346)).